Reading from the N-terminus, the 199-residue chain is Thioredoxin peroxidase (199 aa).

The region spanning 6-165 is the Thioredoxin domain; sequence AKLNHPAPHF…TLRLVKAFQF (160 aa). Residue C52 is the Cysteine sulfenic acid (-SOH) intermediate of the active site. Residues 179-199 form a disordered region; that stretch reads PGSKTMKADPNGSQDYFSSMN. Residues 189-199 are compositionally biased toward polar residues; sequence NGSQDYFSSMN.

Belongs to the peroxiredoxin family. AhpC/Prx1 subfamily. Homodimer; disulfide-linked, upon oxidation.

It catalyses the reaction a hydroperoxide + [thioredoxin]-dithiol = an alcohol + [thioredoxin]-disulfide + H2O. Thiol-specific peroxidase that catalyzes the reduction of hydrogen peroxide and organic hydroperoxides to water and alcohols, respectively. Plays a role in cell protection against oxidative stress by detoxifying peroxides and as sensor of hydrogen peroxide-mediated signaling events. This chain is Thioredoxin peroxidase, found in Trypanosoma brucei rhodesiense.